We begin with the raw amino-acid sequence, 144 residues long: Transcription antitermination protein NusB (144 aa).

It belongs to the NusB family.

In terms of biological role, involved in transcription antitermination. Required for transcription of ribosomal RNA (rRNA) genes. Binds specifically to the boxA antiterminator sequence of the ribosomal RNA (rrn) operons. This chain is Transcription antitermination protein NusB, found in Blochmanniella pennsylvanica (strain BPEN).